Consider the following 766-residue polypeptide: DENN domain-containing protein 1B (766 aa).

The 130-residue stretch at 14–143 (DLVLKVKCHA…YNHPVPKANT (130 aa)) folds into the uDENN domain. A cDENN domain is found at 160–296 (GLPTIPESRN…VVSALKNKLK (137 aa)). The dDENN domain occupies 298–375 (QSTATGDGVA…DGRLAKLNAG (78 aa)). The short motif at 378–382 (FSDIF) is the FXDXF motif element. Positions 472–523 (NEKGENREKHKLSQTHLKRPHKSLDGTLYDDDDDDDDIERASKISSEDGEET) are disordered. The segment covering 480-492 (KHKLSQTHLKRPH) has biased composition (basic residues). Over residues 499–509 (LYDDDDDDDDI) the composition is skewed to acidic residues. Phosphotyrosine is present on Y500. Phosphoserine is present on residues S516, S517, S530, and S533. Positions 547–556 (DLLGEILDTL) match the Clathrin box motif. Disordered stretches follow at residues 611–634 (LGQDDSALHGRQLPPSPRKRVSSG) and 652–732 (LCAD…KPSK). Residues S632 and S633 each carry the phosphoserine modification. Residues 694–704 (TPGQAPLQSED) show a composition bias toward polar residues. A compositionally biased stretch (basic and acidic residues) spans 722–732 (KAGKEDTKPSK).

In terms of assembly, interacts with RAB35. Interacts with clathrin heavy chain/CLTC. Interacts with components of the adapter protein complex 2 (AP-2) AP2A2 and AP2B1. Interacts with CD3E. Phosphorylated on serine and/or threonine, possibly regulating the guanine nucleotide exchange factor (GEF) activity. Expressed in a subset of dendritic cells (DCs).

Its subcellular location is the cytoplasm. The protein resides in the cytosol. The protein localises to the cytoplasmic vesicle. It localises to the clathrin-coated vesicle. Its function is as follows. Guanine nucleotide exchange factor (GEF) for RAB35 that acts as a regulator of T-cell receptor (TCR) internalization in TH2 cells. Acts by promoting the exchange of GDP to GTP, converting inactive GDP-bound RAB35 into its active GTP-bound form. Plays a role in clathrin-mediated endocytosis. Controls cytokine production in TH2 lymphocytes by controlling the rate of TCR internalization and routing to endosomes: acts by mediating clathrin-mediated endocytosis of TCR via its interaction with the adapter protein complex 2 (AP-2) and GEF activity. Dysregulation leads to impaired TCR down-modulation and recycling, affecting cytokine production in TH2 cells. The sequence is that of DENN domain-containing protein 1B from Mus musculus (Mouse).